A 264-amino-acid polypeptide reads, in one-letter code: 3-methyl-2-oxobutanoate hydroxymethyltransferase (264 aa).

Residues Asp-45 and Asp-84 each coordinate Mg(2+). 3-methyl-2-oxobutanoate contacts are provided by residues 45–46, Asp-84, and Lys-112; that span reads DS. Glu-114 is a Mg(2+) binding site. Glu-181 serves as the catalytic Proton acceptor.

The protein belongs to the PanB family. Homodecamer; pentamer of dimers. Requires Mg(2+) as cofactor.

Its subcellular location is the cytoplasm. It catalyses the reaction 3-methyl-2-oxobutanoate + (6R)-5,10-methylene-5,6,7,8-tetrahydrofolate + H2O = 2-dehydropantoate + (6S)-5,6,7,8-tetrahydrofolate. It participates in cofactor biosynthesis; (R)-pantothenate biosynthesis; (R)-pantoate from 3-methyl-2-oxobutanoate: step 1/2. Catalyzes the reversible reaction in which hydroxymethyl group from 5,10-methylenetetrahydrofolate is transferred onto alpha-ketoisovalerate to form ketopantoate. In Vibrio campbellii (strain ATCC BAA-1116), this protein is 3-methyl-2-oxobutanoate hydroxymethyltransferase.